Here is a 229-residue protein sequence, read N- to C-terminus: uncharacterized protein (229 aa).

Residues 1-17 (MKKIIALMLFLTFFAHA) form the signal peptide.

This is an uncharacterized protein from Escherichia coli O157:H7.